Reading from the N-terminus, the 96-residue chain is Small ribosomal subunit protein bS6 (96 aa).

Belongs to the bacterial ribosomal protein bS6 family.

In terms of biological role, binds together with bS18 to 16S ribosomal RNA. This Corynebacterium aurimucosum (strain ATCC 700975 / DSM 44827 / CIP 107346 / CN-1) (Corynebacterium nigricans) protein is Small ribosomal subunit protein bS6.